Here is a 28-residue protein sequence, read N- to C-terminus: Phospholipase A2 3 (28 aa).

The protein belongs to the phospholipase A2 family. Group I subfamily. It depends on Ca(2+) as a cofactor. As to expression, expressed by the venom gland.

The protein localises to the secreted. It catalyses the reaction a 1,2-diacyl-sn-glycero-3-phosphocholine + H2O = a 1-acyl-sn-glycero-3-phosphocholine + a fatty acid + H(+). Snake venom phospholipase A2 (PLA2) that inhibits neuromuscular transmission by blocking acetylcholine release from the nerve termini. PLA2 catalyzes the calcium-dependent hydrolysis of the 2-acyl groups in 3-sn-phosphoglycerides. This is Phospholipase A2 3 from Micrurus nigrocinctus (Central American coral snake).